We begin with the raw amino-acid sequence, 287 residues long: D-alanine--D-alanine ligase (287 aa).

The ATP-grasp domain occupies 98 to 283 (KTKQIAQSVG…FDDVVRITVE (186 aa)). 124-169 (PVIIKPVDEGSSKGLFLCNNKEEAEEAVKKLAKPIIEDYIIGEELT) is an ATP binding site. The Mg(2+) site is built by Asp238, Glu250, and Asn252.

It belongs to the D-alanine--D-alanine ligase family. Mg(2+) serves as cofactor. It depends on Mn(2+) as a cofactor.

It localises to the cytoplasm. The enzyme catalyses 2 D-alanine + ATP = D-alanyl-D-alanine + ADP + phosphate + H(+). Its pathway is cell wall biogenesis; peptidoglycan biosynthesis. Its function is as follows. Cell wall formation. The polypeptide is D-alanine--D-alanine ligase (Fusobacterium nucleatum subsp. nucleatum (strain ATCC 25586 / DSM 15643 / BCRC 10681 / CIP 101130 / JCM 8532 / KCTC 2640 / LMG 13131 / VPI 4355)).